The primary structure comprises 874 residues: Alanine--tRNA ligase (874 aa).

Residues His564, His568, Cys665, and His669 each contribute to the Zn(2+) site.

Belongs to the class-II aminoacyl-tRNA synthetase family. It depends on Zn(2+) as a cofactor.

The protein resides in the cytoplasm. The enzyme catalyses tRNA(Ala) + L-alanine + ATP = L-alanyl-tRNA(Ala) + AMP + diphosphate. In terms of biological role, catalyzes the attachment of alanine to tRNA(Ala) in a two-step reaction: alanine is first activated by ATP to form Ala-AMP and then transferred to the acceptor end of tRNA(Ala). Also edits incorrectly charged Ser-tRNA(Ala) and Gly-tRNA(Ala) via its editing domain. The sequence is that of Alanine--tRNA ligase from Paraburkholderia phytofirmans (strain DSM 17436 / LMG 22146 / PsJN) (Burkholderia phytofirmans).